The primary structure comprises 164 residues: Interferon gamma (164 aa).

The N-terminal stretch at M1–G19 is a signal peptide. N-linked (GlcNAc...) asparagine glycosylation is found at N42 and N61.

Belongs to the type II (or gamma) interferon family. In terms of assembly, homodimer.

The protein localises to the secreted. Functionally, produced by lymphocytes activated by specific antigens or mitogens. IFN-gamma, in addition to having antiviral activity, has important immunoregulatory functions. It is a potent activator of macrophages, it has antiproliferative effects on transformed cells and it can potentiate the antiviral and antitumor effects of the type I interferons. The protein is Interferon gamma (IFNG) of Gallus gallus (Chicken).